Consider the following 140-residue polypeptide: Putative pre-16S rRNA nuclease (140 aa).

The protein belongs to the YqgF nuclease family.

It localises to the cytoplasm. Functionally, could be a nuclease involved in processing of the 5'-end of pre-16S rRNA. In Actinobacillus succinogenes (strain ATCC 55618 / DSM 22257 / CCUG 43843 / 130Z), this protein is Putative pre-16S rRNA nuclease.